Reading from the N-terminus, the 226-residue chain is Protein-L-isoaspartate(D-aspartate) O-methyltransferase (226 aa).

S-adenosyl-L-homocysteine contacts are provided by residues 57-60 (VTIS), His65, Ser89, 115-116 (EH), 147-148 (DG), and Thr222. Ser60 is a catalytic residue.

It belongs to the methyltransferase superfamily. L-isoaspartyl/D-aspartyl protein methyltransferase family. As to quaternary structure, monomer.

The protein resides in the cytoplasm. Its subcellular location is the cytosol. The catalysed reaction is [protein]-L-isoaspartate + S-adenosyl-L-methionine = [protein]-L-isoaspartate alpha-methyl ester + S-adenosyl-L-homocysteine. Initiates the repair of damaged proteins by catalyzing methyl esterification of L-isoaspartyl and D-aspartyl residues produced by spontaneous isomerization and racemization of L-aspartyl and L-asparaginyl residues in aging peptides and proteins. This Drosophila melanogaster (Fruit fly) protein is Protein-L-isoaspartate(D-aspartate) O-methyltransferase (Pcmt).